We begin with the raw amino-acid sequence, 250 residues long: MLILVTNDDGVHAPGIAALADSLHGLGQVVVVAPDRDRSAIGHALTLHAPLRADELRPGVFAVDGTPTDCVNLGIHGLLSSVPDLVVAGINRGANLGDDITYSGTVCAAMEATLMGVPALAVSLEGDTFASSEYRQAADAALFLAQKVSEEGLPSDTFLNVNVPAGRIRGIRLTRQGRRRYGDMVVEKMDPRGRKYYWLGAGECDFDYVDGTDCHAMHEGFISVTPLHLDLTNFRSFECLSRWSMTYSMD.

Residues Asp8, Asp9, Ser39, and Asn91 each contribute to the a divalent metal cation site.

It belongs to the SurE nucleotidase family. A divalent metal cation is required as a cofactor.

The protein resides in the cytoplasm. It carries out the reaction a ribonucleoside 5'-phosphate + H2O = a ribonucleoside + phosphate. In terms of biological role, nucleotidase that shows phosphatase activity on nucleoside 5'-monophosphates. In Syntrophotalea carbinolica (strain DSM 2380 / NBRC 103641 / GraBd1) (Pelobacter carbinolicus), this protein is 5'-nucleotidase SurE.